Reading from the N-terminus, the 572-residue chain is MPHVSRKEYSSLFGPTVGDKIRLGNTELFIEIEKDLRGYGDESVYGGGKSLRDGMGANNNLTRDNGVLDLVITNVTIIDACLGVIKADVGIKDGKISGIGKSGNPNTMDGVTPTMVVGASTDAISGEHLILTAAGIDTHIHLISPQQAYHALSNGVTTFFGGGIGPTDGSNGTTVTAGPWNIRQMLRSFESLPLNVGLLGKGNACGYGPLEEQIIAGAAGLKVHEDWGATASALRYALRIADKMDIQVAVHTDSLNEGGYVEDTIDAFEGRTVHTFHTEGAGGGHAPDIIKVASLMNVLPSSTNPTLPFGINSQAELFDMIMICHNLNPNVPADVAFAESRVRPETIAAENVLQDMGVISMFSSDSQAMGRVGENWLRLIQTANAMKVARGKLPEDAAGNDNFRVLRYVAKITINPAIAQGVSHVIGSIEVGKMADLVLWDPRFFGAKPKMVIKGGMISWSTMGDSNASLPTTQPITYRPMFGAMGKTMNDTCVTFVSQASLEDGVREKAGLDRNVIAVKNCRNVSKQDLVRNNNMPNIDVDPETFAVKVDGVHATCKPVDIAAMNQLYFFG.

A Urease domain is found at 134-572 (AGIDTHIHLI…AAMNQLYFFG (439 aa)). 3 residues coordinate Ni(2+): His139, His141, and Lys222. Position 222 is an N6-carboxylysine (Lys222). His224 is a binding site for substrate. His251 and His277 together coordinate Ni(2+). The Proton donor role is filled by His325. Asp365 contacts Ni(2+).

Belongs to the metallo-dependent hydrolases superfamily. Urease alpha subunit family. In terms of assembly, heterotrimer of UreA (gamma), UreB (beta) and UreC (alpha) subunits. Three heterotrimers associate to form the active enzyme. Requires Ni cation as cofactor. Post-translationally, carboxylation allows a single lysine to coordinate two nickel ions.

Its subcellular location is the cytoplasm. It catalyses the reaction urea + 2 H2O + H(+) = hydrogencarbonate + 2 NH4(+). It participates in nitrogen metabolism; urea degradation; CO(2) and NH(3) from urea (urease route): step 1/1. This is Urease subunit alpha from Edwardsiella ictaluri (strain 93-146).